The following is a 218-amino-acid chain: Redox-sensing transcriptional repressor Rex (218 aa).

The segment at residues 25–64 (WYLSYVQLLHADGCESVSSTRIARAVGVDASLVAKDLSYV) is a DNA-binding region (H-T-H motif). 99–104 (GVGSLG) contributes to the NAD(+) binding site.

The protein belongs to the transcriptional regulatory Rex family. As to quaternary structure, homodimer.

The protein resides in the cytoplasm. Modulates transcription in response to changes in cellular NADH/NAD(+) redox state. This chain is Redox-sensing transcriptional repressor Rex, found in Porphyromonas gingivalis (strain ATCC BAA-308 / W83).